The chain runs to 499 residues: Aprataxin and PNK-like factor (499 aa).

The region spanning 1–108 (MPSDFFLQPL…RVFSAESEVE (108 aa)) is the FHA-like domain. Position 116 is a phosphoserine; by ATM (serine 116). Disordered stretches follow at residues 134–183 (VNLP…TQRK), 197–292 (DQSL…KTNK), and 305–358 (VSKH…DTAD). A compositionally biased stretch (polar residues) spans 141–152 (TGASQLQGSPEI). At serine 149 the chain carries Phosphoserine. The short motif at 182–191 (RKRILPAWML) is the KBM element. Polar residues predominate over residues 239–248 (PSGNSKSVSA). Basic and acidic residues predominate over residues 251 to 261 (DPGKKCRKADQ). Residues 264–278 (PGVSSENVPESSSSN) are compositionally biased toward low complexity. A compositionally biased stretch (basic and acidic residues) spans 281–292 (KDPDVDIVKTNK). Low complexity predominate over residues 340 to 349 (PESSSAPSSP). A glycoprotein is bound by residues arginine 371, tyrosine 376, tyrosine 381, and arginine 382. The segment at 372-393 (TACMYGANCYRRNPLHFQHFSH) adopts a PBZ-type 1 zinc-finger fold. Residues 401 to 411 (EVHGTDEGVIG) form a flexible linker region. A PBZ-type 2 zinc finger spans residues 414-435 (PECPYGASCYRKNPQHKMEYRH). The a glycoprotein site is built by tyrosine 418, tyrosine 423, and arginine 424. The interval 440–499 (ARVALDEDDDDVGQPSDDEDEEDYEPTDEDSDWHPGKDDEEQEDVDELLKEAKSSLHLKH) is disordered. Over residues 445–470 (DEDDDDVGQPSDDEDEEDYEPTDEDS) the composition is skewed to acidic residues. The short motif at 463-487 (YEPTDEDSDWHPGKDDEEQEDVDEL) is the NAP1L motif element.

It belongs to the APLF family. Interacts with LIG4. Interacts with PARP1. Interacts with XRCC4. Interacts (via KBM motif) with XRCC5 and XRCC6; promoting recruitment to DNA damage sites. Interacts with XRCC1. Interacts (via C-terminal disordered region) with histones; interacts with histone H2A, H2B and H3-H4. Post-translationally, poly-ADP-ribosylated. In addition to binding non covalently poly-ADP-ribose via its PBZ-type zinc fingers, the protein is also covalently poly-ADP-ribosylated by PARP1. Phosphorylated in an ATM-dependent manner upon double-strand DNA break.

It localises to the nucleus. The protein resides in the chromosome. The protein localises to the cytoplasm. Its subcellular location is the cytosol. Histone chaperone involved in single-strand and double-strand DNA break repair. Recruited to sites of DNA damage through interaction with branched poly-ADP-ribose chains, a polymeric post-translational modification synthesized transiently at sites of chromosomal damage to accelerate DNA strand break repair reactions. Following recruitment to DNA damage sites, acts as a histone chaperone that mediates histone eviction during DNA repair and promotes recruitment of histone variant MACROH2A1. Also has a nuclease activity: displays apurinic-apyrimidinic (AP) endonuclease and 3'-5' exonuclease activities in vitro. Also able to introduce nicks at hydroxyuracil and other types of pyrimidine base damage. Together with PARP3, promotes the retention of the LIG4-XRCC4 complex on chromatin and accelerate DNA ligation during non-homologous end-joining (NHEJ). Also acts as a negative regulator of cell pluripotency by promoting histone exchange. Required for the embryo implantation during the epithelial to mesenchymal transition in females. The protein is Aprataxin and PNK-like factor (Aplf) of Mus musculus (Mouse).